The following is a 164-amino-acid chain: MTCQTYCLFVLSVIMIYFGCSGSALFLGQLQNDIDKLKADFNASNSDVADGNPVFIEKVKNWTERNEKRIILSQIVTLYLEMLKKTDMSKPHIKNLSEQLNTLRNTLSNDYKKFRDLVELSNLQLTGLKIQRKAVSELFSVLQKLVETSTSKRKRSQSPKRCRC.

A signal peptide spans 1-19 (MTCQTYCLFVLSVIMIYFG). N-linked (GlcNAc...) asparagine glycans are attached at residues asparagine 42, asparagine 61, and asparagine 95.

It belongs to the type II (or gamma) interferon family. In terms of assembly, homodimer.

It localises to the secreted. Produced by lymphocytes activated by specific antigens or mitogens. IFN-gamma, in addition to having antiviral activity, has important immunoregulatory functions. It is a potent activator of macrophages, it has antiproliferative effects on transformed cells and it can potentiate the antiviral and antitumor effects of the type I interferons. The chain is Interferon gamma (IFNG) from Anas platyrhynchos (Mallard).